The sequence spans 1293 residues: Phosphoribosylformylglycinamidine synthase (1293 aa).

ATP-binding positions include 305–316 (GAATGSGGEIRD) and A676. Residues 305–328 (GAATGSGGEIRDEGATGRGSKPKA) are disordered. Mg(2+) is bound by residues D677, E716, N720, and D884. An ATP-binding site is contributed by S886. The Glutamine amidotransferase type-1 domain occupies 1040 to 1293 (MAILREQGVN…MFRNARVNLG (254 aa)). Catalysis depends on C1133, which acts as the Nucleophile. Residues H1258 and E1260 contribute to the active site.

This sequence in the N-terminal section; belongs to the FGAMS family. As to quaternary structure, monomer.

The protein localises to the cytoplasm. It carries out the reaction N(2)-formyl-N(1)-(5-phospho-beta-D-ribosyl)glycinamide + L-glutamine + ATP + H2O = 2-formamido-N(1)-(5-O-phospho-beta-D-ribosyl)acetamidine + L-glutamate + ADP + phosphate + H(+). The protein operates within purine metabolism; IMP biosynthesis via de novo pathway; 5-amino-1-(5-phospho-D-ribosyl)imidazole from N(2)-formyl-N(1)-(5-phospho-D-ribosyl)glycinamide: step 1/2. Functionally, phosphoribosylformylglycinamidine synthase involved in the purines biosynthetic pathway. Catalyzes the ATP-dependent conversion of formylglycinamide ribonucleotide (FGAR) and glutamine to yield formylglycinamidine ribonucleotide (FGAM) and glutamate. The polypeptide is Phosphoribosylformylglycinamidine synthase (Shewanella sp. (strain MR-7)).